The primary structure comprises 1153 residues: MGSLSQQAHGPPDAPRSKEELLIHAKDFINQYFTSFQMNKTRAHFHRLGEINDLIEKSGTYDLTMAELTFGAKHAWRNAPGCIGRSQWSKLQVFDAREIGTPREMFEALCSHIRYATNEGKIRSTITIFPQRKEGRPDFRVWNTQLISYAGYKLGDGKVIGDPANVEFTEMCVEMGWKPKHGMFDLLPLVLSAAENSPEYFELPTELVLEVTLKHPEYPWFAEMGLKWYALPTDSGMLLDCGGLEFPSCPFNGWFMGTMIGSRNLCDPHRYNMLEPIGLKMGLNTETASSLWKDRVLIEVNVAVLYSFESANVTIVNHHDASTDFISHMDKEIKLRGGCPSDWVRMVPPMSGSTLEVFHQEMLLYNLHPAFVRQDVKPWKKHVWKSDQSVPINSCNPKRKLGFKALARAVEFSASLMSKALSSRVKCSIFYATETGRSERFARRLSEIFKPVFHSRVVCMDDYAVETLEHESLVMVITSTFGNGEPPENGKQFAQSLLDMKRKYDCDLGFLESCSSISTCIKSSILTEGPLAADVIGDRQSLAMGTGPLCNVRFAVFGLGSKAYPYYAAYGKYIYLMLQELGAERLVNYCAGDALYGQEQSFRAWSEEVFKASCEAFCLDNRNDAPGPQTKGDCSKVRIVPVENCQEPDLCQVLRNIHGKEVMPLILAERIQLQAKDSDQQTILIKLDAHNATDLKYAPGDHVAIFPANSPEIVDAILVRLDTSKGPSPDQVVKTEISTQLGTNDTWRSHLPICTSRTAFSFLLDVTTPPSQEILQVLATQASSDMDKHKLEQLASNSEAYEKWRLDLSPNILEILDEFPSLKIPPSLLLTQLPLLQPRYYSISSSQQKNPNEVHATIAVVRFKTQDGDGPVHEGVCSSWLNRSPIGTVVPCFLRSAPHFHLPEDPSLPIIMIGPGSGIAPFRSFWQQRLGEIENTMPSCENTMLSCETTIPSCENSMPSCENTMPSCENTMPSCENTIPSCENTIPSCENTMPSCENTIPSWERTMQPCQIILPSQTKKHFGEMVLYTGCRTAKHMIYAAELEEMKRLGVLSNYHVALSREAALPKMYVQDIIIKNAAAVYEIVMKKGGHFYVSGDVSMAHDVTRALELVLCQQGGREASQQVMSLRDENLFHEDIFGSFVRKAGGQRSEDE.

(6R)-L-erythro-5,6,7,8-tetrahydrobiopterin is bound at residue Ser-3. A heme b-binding site is contributed by Cys-82. L-arginine-binding residues include Gln-145, Trp-254, and Asn-264. Residue Phe-358 coordinates (6R)-L-erythro-5,6,7,8-tetrahydrobiopterin. Residues 397–417 (PKRKLGFKALARAVEFSASLM) are calmodulin-binding. The region spanning 427–610 (CSIFYATETG…SFRAWSEEVF (184 aa)) is the Flavodoxin-like domain. 556–587 (VFGLGSKAYPYYAAYGKYIYLMLQELGAERLV) is a binding site for FMN. The region spanning 660–903 (KEVMPLILAE…LRSAPHFHLP (244 aa)) is the FAD-binding FR-type domain. FAD-binding positions include 697–708 (YAPGDHVAIFPA) and 836–846 (LQPRYYSISSS). 911–929 (IMIGPGSGIAPFRSFWQQR) contacts NADP(+). 11 consecutive repeat copies span residues 934–940 (ENTMPSC), 941–947 (ENTMLSC), 948–954 (ETTIPSC), 955–961 (ENSMPSC), 962–968 (ENTMPSC), 969–975 (ENTMPSC), 976–982 (ENTIPSC), 983–989 (ENTIPSC), 990–996 (ENTMPSC), 997–1003 (ENTIPSW), and 1004–1010 (ERTMQPC). The segment at 934–1010 (ENTMPSCENT…PSWERTMQPC (77 aa)) is 11 X 7 AA tandem repeats of E-[NTR]-[ST]-[IM]-[PLQ]-[SP]-[CW]. 1089-1104 (GGHFYVSGDVSMAHDV) provides a ligand contact to NADP(+).

It belongs to the NOS family. The cofactor is heme b. FAD is required as a cofactor. Requires FMN as cofactor. Expressed in the central nervous system, in the serotonergic cerebral giant cells. The isoform Long and isoform Short are expressed equally in the CNS.

The enzyme catalyses 2 L-arginine + 3 NADPH + 4 O2 + H(+) = 2 L-citrulline + 2 nitric oxide + 3 NADP(+) + 4 H2O. With respect to regulation, stimulated by calcium/calmodulin. Its function is as follows. Produces nitric oxide (NO) which is a messenger molecule with diverse functions throughout the body. This is Nitric oxide synthase (NOS) from Lymnaea stagnalis (Great pond snail).